The primary structure comprises 122 residues: Large ribosomal subunit protein uL14 (122 aa).

Belongs to the universal ribosomal protein uL14 family. In terms of assembly, part of the 50S ribosomal subunit. Forms a cluster with proteins L3 and L19. In the 70S ribosome, L14 and L19 interact and together make contacts with the 16S rRNA in bridges B5 and B8.

In terms of biological role, binds to 23S rRNA. Forms part of two intersubunit bridges in the 70S ribosome. The polypeptide is Large ribosomal subunit protein uL14 (Syntrophus aciditrophicus (strain SB)).